Reading from the N-terminus, the 162-residue chain is Phosphopantetheine adenylyltransferase (162 aa).

Thr9 contacts substrate. ATP contacts are provided by residues 9 to 10 (TF) and His17. Substrate-binding residues include Lys41, Leu73, and Arg87. ATP-binding positions include 88-90 (GLR), Glu98, and 123-129 (LSYISSS).

The protein belongs to the bacterial CoaD family. In terms of assembly, homohexamer. Mg(2+) serves as cofactor.

Its subcellular location is the cytoplasm. The enzyme catalyses (R)-4'-phosphopantetheine + ATP + H(+) = 3'-dephospho-CoA + diphosphate. Its pathway is cofactor biosynthesis; coenzyme A biosynthesis; CoA from (R)-pantothenate: step 4/5. In terms of biological role, reversibly transfers an adenylyl group from ATP to 4'-phosphopantetheine, yielding dephospho-CoA (dPCoA) and pyrophosphate. The protein is Phosphopantetheine adenylyltransferase of Teredinibacter turnerae (strain ATCC 39867 / T7901).